Here is a 278-residue protein sequence, read N- to C-terminus: uncharacterized protein (278 aa).

Belongs to the short-chain dehydrogenases/reductases (SDR) family.

This is an uncharacterized protein from Bacillus subtilis (strain 168).